The primary structure comprises 344 residues: Small ribosomal subunit protein mS38 (344 aa).

3 disordered regions span residues Met-1–Ala-27, Ala-43–Ser-101, and Lys-325–Leu-344. Residues Ser-51–Ala-74 are compositionally biased toward low complexity. The segment covering Lys-325–Arg-338 has biased composition (basic residues).

Belongs to the mitochondrion-specific ribosomal protein mS38 family. As to quaternary structure, component of the mitochondrial small ribosomal subunit (mt-SSU). Mature N.crassa 74S mitochondrial ribosomes consist of a small (37S) and a large (54S) subunit. The 37S small subunit contains a 16S ribosomal RNA (16S mt-rRNA) and 32 different proteins. The 54S large subunit contains a 23S rRNA (23S mt-rRNA) and 42 different proteins.

The protein resides in the mitochondrion. In terms of biological role, component of the mitochondrial ribosome (mitoribosome), a dedicated translation machinery responsible for the synthesis of mitochondrial genome-encoded proteins, including at least some of the essential transmembrane subunits of the mitochondrial respiratory chain. The mitoribosomes are attached to the mitochondrial inner membrane and translation products are cotranslationally integrated into the membrane. The polypeptide is Small ribosomal subunit protein mS38 (cox24) (Neurospora crassa (strain ATCC 24698 / 74-OR23-1A / CBS 708.71 / DSM 1257 / FGSC 987)).